Consider the following 313-residue polypeptide: MNKLVFCLMGPTASGKTGLACELLTHFPFEIISVDSAMIYRDMNIGTAKPSIHELQSAPHYLIDIKDPVESYSAAQFCTDALSLCAAIIKRGNIPLLVGGTMMYFNALQKGLATLPEADEAVRKRLEEEALSQGWDFLYQKLSQLDPVTAARIHAHDTQRIQRALEVYYLTGSTLSTYLTGPHEQPDYCFVNLALFPEQRSWLHERIAQRFDAMLSEGFIEEVQQLQAKWPIQINLPSMRCVGYRQILEYLAGHYDYETMREKGIAATRQLAKRQLTWLRHWEGALFYDSQNVGFNTDIIAKIREILDNTVSN.

10-17 is a binding site for ATP; that stretch reads GPTASGKT. A substrate-binding site is contributed by 12-17; it reads TASGKT. Interaction with substrate tRNA regions lie at residues 35–38, 159–163, and 240–245; these read DSAM, QRIQR, and RCVGYR.

Belongs to the IPP transferase family. In terms of assembly, monomer. The cofactor is Mg(2+).

It carries out the reaction adenosine(37) in tRNA + dimethylallyl diphosphate = N(6)-dimethylallyladenosine(37) in tRNA + diphosphate. Catalyzes the transfer of a dimethylallyl group onto the adenine at position 37 in tRNAs that read codons beginning with uridine, leading to the formation of N6-(dimethylallyl)adenosine (i(6)A). The protein is tRNA dimethylallyltransferase of Legionella pneumophila (strain Lens).